The primary structure comprises 55 residues: UPF0391 membrane protein Tbd_2772 (55 aa).

The next 2 helical transmembrane spans lie at Met1–Ala21 and Ala28–Met48.

This sequence belongs to the UPF0391 family.

It is found in the cell membrane. This chain is UPF0391 membrane protein Tbd_2772, found in Thiobacillus denitrificans (strain ATCC 25259 / T1).